The chain runs to 225 residues: Small ribosomal subunit protein eS1 (225 aa).

It belongs to the eukaryotic ribosomal protein eS1 family.

This Methanococcus maripaludis (strain C6 / ATCC BAA-1332) protein is Small ribosomal subunit protein eS1.